Reading from the N-terminus, the 397-residue chain is ATP-dependent RNA helicase eIF4A (397 aa).

The Q motif motif lies at 24-52 (DSFDDMNLKSELLRGIYAYGFERPSAIQQ). One can recognise a Helicase ATP-binding domain in the interval 55 to 225 (IMPVIKGHDV…TKFMRDPVRI (171 aa)). 68–75 (AQSGTGKT) is an ATP binding site. A DEAD box motif is present at residues 173–176 (DEAD). The Helicase C-terminal domain maps to 236-397 (GIKQFYIAVE…EMPMNVADLI (162 aa)).

Belongs to the DEAD box helicase family. eIF4A subfamily. As to quaternary structure, component of the eIF4F complex, which composition varies with external and internal environmental conditions. It is composed of at least eIF4A, eIF4E and eIF4G.

It is found in the cytoplasm. It catalyses the reaction ATP + H2O = ADP + phosphate + H(+). Its function is as follows. ATP-dependent RNA helicase which is a subunit of the eIF4F complex involved in cap recognition and is required for mRNA binding to ribosome. In the current model of translation initiation, eIF4A unwinds RNA secondary structures in the 5'-UTR of mRNAs which is necessary to allow efficient binding of the small ribosomal subunit, and subsequent scanning for the initiator codon. This Chaetomium globosum (strain ATCC 6205 / CBS 148.51 / DSM 1962 / NBRC 6347 / NRRL 1970) (Soil fungus) protein is ATP-dependent RNA helicase eIF4A (TIF1).